The primary structure comprises 1079 residues: Psi-producing oxygenase A (1079 aa).

The tract at residues 105-446 (TNTFLTTLWN…DGSYDDNDLV (342 aa)) is linoleate 8R-lipoxygenase. Histidine 202 provides a ligand contact to heme b. Tyrosine 374 is a catalytic residue. Histidine 377 serves as a coordination point for heme b. The interval 654-1079 (QFINSHSACM…WDGDLPEVKE (426 aa)) is 9,12-octadecadienoate 8-hydroperoxide 8R-isomerase.

Belongs to the peroxidase family. Homotetramer. It depends on heme b as a cofactor.

The enzyme catalyses (9Z,12Z)-octadecadienoate + O2 = (8R,9Z,12Z)-8-hydroperoxyoctadeca-9,12-dienoate. The catalysed reaction is (8R,9Z,12Z)-8-hydroperoxyoctadeca-9,12-dienoate = (5S,8R,9Z,12Z)-5,8-dihydroxyoctadeca-9,12-dienoate. Bifunctional heme-containing enzyme that oxidizes linoleic acid to (8R,9Z,12Z)-8-hydroperoxyoctadeca-9,12-dienoate (within the N-terminal heme peroxidase domain), which is subsequently isomerized to (5S,8R,9Z,12Z)-5,8-dihydroxyoctadeca-9,12-dienoate (within the C-terminal P450 heme thiolate domain). Oxidized unsaturated fatty acids, so-called oxylipins, derived from endogenous fatty acids, influence the development of the asexual conidiophores and sexual cleistothecia and regulate the secondary metabolism. These substances were collectively named psi factors and are primarily a mixture of hydroxylated oleic, linoleic and alpha-linolenic acids. They are termed psi-beta, psi-alpha, and psi-gamma, respectively. Oxylipins may also serve as activators of mammalian immune responses contributing to enhanced resistance to opportunistic fungi and as factors that modulate fungal development contributing to resistance to host defenses. The chain is Psi-producing oxygenase A (ppoA) from Aspergillus fumigatus (strain CBS 144.89 / FGSC A1163 / CEA10) (Neosartorya fumigata).